Reading from the N-terminus, the 96-residue chain is Prokineticin Bm8-b (96 aa).

The signal sequence occupies residues 1–19 (MKCFAQIVVLLLVIAFSHG). 4 cysteine pairs are disulfide-bonded: Cys-32–Cys-50, Cys-37–Cys-78, Cys-60–Cys-86, and Cys-80–Cys-95.

It belongs to the AVIT (prokineticin) family. In terms of tissue distribution, expressed by the skin glands.

The protein resides in the secreted. Its function is as follows. Potent agonist for both PKR1/PROKR1 and PKR2/PROKR2, and inducer of a potent and long-lasting hyperalgesia. Also potentiates capsaicin-induced TRPV1 current, when tested on DRG neurons. At subnanomolar concentrations, this protein both induces potent chemotaxis of macrophages and stimulates LPS-induced production of the pro-inflammatory cytokines IL-1 and IL-12. In vivo, potently stimulates the contraction of the guinea-pig gastrointestinal (GI) smooth muscle (nanomolar concentration). This Bombina maxima (Giant fire-bellied toad) protein is Prokineticin Bm8-b.